A 510-amino-acid polypeptide reads, in one-letter code: Amidophosphoribosyltransferase (510 aa).

Catalysis depends on cysteine 2, which acts as the Nucleophile. Residues 2-239 (CGILGIVLAN…PGEAVIIPKN (238 aa)) form the Glutamine amidotransferase type-2 domain. Residues aspartate 373 and aspartate 374 each contribute to the Mg(2+) site.

It in the C-terminal section; belongs to the purine/pyrimidine phosphoribosyltransferase family. The cofactor is Mg(2+).

The enzyme catalyses 5-phospho-beta-D-ribosylamine + L-glutamate + diphosphate = 5-phospho-alpha-D-ribose 1-diphosphate + L-glutamine + H2O. Its pathway is purine metabolism; IMP biosynthesis via de novo pathway; N(1)-(5-phospho-D-ribosyl)glycinamide from 5-phospho-alpha-D-ribose 1-diphosphate: step 1/2. The polypeptide is Amidophosphoribosyltransferase (ADE4) (Saccharomyces cerevisiae (strain ATCC 204508 / S288c) (Baker's yeast)).